A 110-amino-acid chain; its full sequence is MANDARPLARLANCRVGDQSSATHAYTVGPVLGVPPTGGVDLRYGGRAGIGRSETVTDHGAVGRRYHQPCAGQIRLSELRVTILLRCETLCETAQLLRCPPLPCDCSTPL.

May play a regulatory role in sulfomenaquinone (SMK) biosynthesis. This is an uncharacterized protein from Mycobacterium bovis (strain ATCC BAA-935 / AF2122/97).